A 1142-amino-acid chain; its full sequence is Fibronectin type-III domain-containing protein 3A (1142 aa).

Positions 104–191 (YGDVDAHSTH…KSGKGKGGTQ (88 aa)) are disordered. Positions 107-145 (VDAHSTHGRSNFRDERSSKTYERLQKKLKDRQGTQKDKM) are enriched in basic and acidic residues. Residues 146-158 (SSPPSSPQKCPSP) are compositionally biased toward low complexity. Phosphoserine is present on residues Ser147, Ser151, and Ser157. 9 Fibronectin type-III domains span residues 212-313 (NIVK…TLSC), 317-409 (IPNP…TSGC), 413-506 (MPAS…TCPD), 510-604 (IPVK…TPAV), 608-701 (PCLP…TAPG), 705-795 (QCKP…TPPS), 805-894 (EISD…TKPL), 895-989 (PPDP…TPKS), and 990-1095 (VPAA…TEPP). N6-acetyllysine is present on Lys328. Residues 1121–1141 (NLVLFAFFSILIAFIIQYFVI) form a helical membrane-spanning segment.

Belongs to the FNDC3 family.

Its subcellular location is the golgi apparatus membrane. In terms of biological role, mediates spermatid-Sertoli adhesion during spermatogenesis. This chain is Fibronectin type-III domain-containing protein 3A (FNDC3A), found in Pongo abelii (Sumatran orangutan).